The following is a 224-amino-acid chain: Ribose-5-phosphate isomerase A (224 aa).

Residues 26–29, 81–84, and 94–97 contribute to the substrate site; these read TGST, DGAD, and KGGG. Catalysis depends on E103, which acts as the Proton acceptor. Residue K121 coordinates substrate.

It belongs to the ribose 5-phosphate isomerase family. As to quaternary structure, homodimer.

It catalyses the reaction aldehydo-D-ribose 5-phosphate = D-ribulose 5-phosphate. Its pathway is carbohydrate degradation; pentose phosphate pathway; D-ribose 5-phosphate from D-ribulose 5-phosphate (non-oxidative stage): step 1/1. Its function is as follows. Catalyzes the reversible conversion of ribose-5-phosphate to ribulose 5-phosphate. This Listeria monocytogenes serotype 4b (strain CLIP80459) protein is Ribose-5-phosphate isomerase A.